Here is a 198-residue protein sequence, read N- to C-terminus: AICSLVLYLLTLMLMEKLSSNTVDAQEVELIWTILPAIVLILLALPSLQILYMMDEIDEPDLTLKAIGHQWYWSYEYTDFKDLSFDSYMIPTPDLPTGYFRLLEVDNRVVIPMESPIRMIITAADVLHSWAVPTLGVKTDAIPGRLNQTSFITTRPGIFYGQCSEICGANHSFMPIVVESTPLPHFESWSSLLSTSSL.

The helical transmembrane segment at 1–13 (AICSLVLYLLTLM) threads the bilayer. The Mitochondrial matrix portion of the chain corresponds to 14 to 26 (LMEKLSSNTVDAQ). A helical membrane pass occupies residues 27–54 (EVELIWTILPAIVLILLALPSLQILYMM). At 55–198 (DEIDEPDLTL…WSSLLSTSSL (144 aa)) the chain is on the mitochondrial intermembrane side. Residues His128, Cys163, Glu165, Cys167, His171, and Met174 each coordinate Cu cation. Glu165 contributes to the Mg(2+) binding site.

The protein belongs to the cytochrome c oxidase subunit 2 family. As to quaternary structure, component of the cytochrome c oxidase (complex IV, CIV), a multisubunit enzyme composed of 14 subunits. The complex is composed of a catalytic core of 3 subunits MT-CO1, MT-CO2 and MT-CO3, encoded in the mitochondrial DNA, and 11 supernumerary subunits COX4I, COX5A, COX5B, COX6A, COX6B, COX6C, COX7A, COX7B, COX7C, COX8 and NDUFA4, which are encoded in the nuclear genome. The complex exists as a monomer or a dimer and forms supercomplexes (SCs) in the inner mitochondrial membrane with NADH-ubiquinone oxidoreductase (complex I, CI) and ubiquinol-cytochrome c oxidoreductase (cytochrome b-c1 complex, complex III, CIII), resulting in different assemblies (supercomplex SCI(1)III(2)IV(1) and megacomplex MCI(2)III(2)IV(2)). Found in a complex with TMEM177, COA6, COX18, COX20, SCO1 and SCO2. Interacts with TMEM177 in a COX20-dependent manner. Interacts with COX20. Interacts with COX16. Cu cation is required as a cofactor.

The protein resides in the mitochondrion inner membrane. It carries out the reaction 4 Fe(II)-[cytochrome c] + O2 + 8 H(+)(in) = 4 Fe(III)-[cytochrome c] + 2 H2O + 4 H(+)(out). Its function is as follows. Component of the cytochrome c oxidase, the last enzyme in the mitochondrial electron transport chain which drives oxidative phosphorylation. The respiratory chain contains 3 multisubunit complexes succinate dehydrogenase (complex II, CII), ubiquinol-cytochrome c oxidoreductase (cytochrome b-c1 complex, complex III, CIII) and cytochrome c oxidase (complex IV, CIV), that cooperate to transfer electrons derived from NADH and succinate to molecular oxygen, creating an electrochemical gradient over the inner membrane that drives transmembrane transport and the ATP synthase. Cytochrome c oxidase is the component of the respiratory chain that catalyzes the reduction of oxygen to water. Electrons originating from reduced cytochrome c in the intermembrane space (IMS) are transferred via the dinuclear copper A center (CU(A)) of subunit 2 and heme A of subunit 1 to the active site in subunit 1, a binuclear center (BNC) formed by heme A3 and copper B (CU(B)). The BNC reduces molecular oxygen to 2 water molecules using 4 electrons from cytochrome c in the IMS and 4 protons from the mitochondrial matrix. The sequence is that of Cytochrome c oxidase subunit 2 (MT-CO2) from Tinamus major (Great tinamou).